Reading from the N-terminus, the 209-residue chain is Abscisic acid receptor PYL5 (209 aa).

The START-like stretch occupies residues 44 to 196; that stretch reads HAPGEHQCSS…NLTSLAEVSE (153 aa). An intrachain disulfide couples Cys51 to Cys177. Residues Lys80, 109–114, 136–142, and Glu161 contribute to the abscisate site; these read ATTSTE and RLRNYSS. The Gate loop signature appears at 105–109; that stretch reads TGLPA. Positions 135–137 match the Latch loop motif; that stretch reads HRL.

It belongs to the PYR/PYL/RCAR abscisic acid intracellular receptor family. As to quaternary structure, monomer. Interacts with PP2C30. Binding to PP2C30 is dependent on the presence of abscisic acid (ABA). Interacts with PP2C51. Binding to PP2C51 is dependent on the presence of ABA. Interacts with PP2C50. Binding to PP2C50 is dependent on the presence of ABA. Interacts with PP2C53. Expressed in leaf sheaths and leaf blades. Expressed at low levels in roots, flowers and seeds.

Its subcellular location is the nucleus. It is found in the cytoplasm. It localises to the cytosol. Its function is as follows. Intracellular abscisic acid (ABA) receptor that functions as a positive regulator of ABA signaling pathway. Together with ABI5, PP2C30 and SAPK2, is part of an ABA signaling unit that modulates seed germination and early seedling growth. Acts as a positive regulator of abiotic stress-responsive gene expression. Inhibits the protein phosphatases PP2C06 and PP2C09 when activated by ABA. The chain is Abscisic acid receptor PYL5 from Oryza sativa subsp. japonica (Rice).